The chain runs to 201 residues: Ribosome maturation factor RimP (201 aa).

It belongs to the RimP family.

Its subcellular location is the cytoplasm. Its function is as follows. Required for maturation of 30S ribosomal subunits. In Rhizobium leguminosarum bv. trifolii (strain WSM2304), this protein is Ribosome maturation factor RimP.